The chain runs to 205 residues: Rho-related GTP-binding protein RhoQ (205 aa).

Residue 16–23 (GDGAVGKT) participates in GTP binding. The short motif at 38-46 (YVPTVFDHY) is the Effector region element. GTP contacts are provided by residues 63–67 (DTAGQ) and 121–124 (TQID). At Cys-202 the chain carries Cysteine methyl ester. A lipid anchor (S-farnesyl cysteine) is attached at Cys-202. Positions 203-205 (LIT) are cleaved as a propeptide — removed in mature form.

It belongs to the small GTPase superfamily. Rho family. As to quaternary structure, interacts with EXO70, CDC42EP1, CDC42EP2 and CDC42EP3 in a GTP-dependent manner. Interacts with CDC42EP4, PARD6A, PARD6G (and probably PARD6B) in a GTP-dependent manner. Part of a quaternary complex containing PARD3, some PARD6 protein (PARD6A, PARD6B or PARD6G) and some atypical PKC protein (PRKCI or PRKCZ). Interacts with GOPC. Interacts with ARHGAP33/TCGAP. Post-translationally, may be post-translationally modified by both palmitoylation and polyisoprenylation.

The protein resides in the cytoplasm. Its subcellular location is the cell membrane. Regulated by guanine nucleotide exchange factors (GEFs) which promote the exchange of bound GDP for free GTP, GTPase activating proteins (GAPs) which increase the GTP hydrolysis activity, and GDP dissociation inhibitors which inhibit the dissociation of the nucleotide from the GTPase. In terms of biological role, plasma membrane-associated small GTPase which cycles between an active GTP-bound and an inactive GDP-bound state. In active state binds to a variety of effector proteins to regulate cellular responses. Involved in epithelial cell polarization processes. May play a role in CFTR trafficking to the plasma membrane. Causes the formation of thin, actin-rich surface projections called filopodia. The protein is Rho-related GTP-binding protein RhoQ (Rhoq) of Mus musculus (Mouse).